Consider the following 231-residue polypeptide: Probable septum site-determining protein MinC (231 aa).

This sequence belongs to the MinC family. In terms of assembly, interacts with MinD and FtsZ.

Functionally, cell division inhibitor that blocks the formation of polar Z ring septums. Rapidly oscillates between the poles of the cell to destabilize FtsZ filaments that have formed before they mature into polar Z rings. Prevents FtsZ polymerization. The sequence is that of Probable septum site-determining protein MinC from Bradyrhizobium diazoefficiens (strain JCM 10833 / BCRC 13528 / IAM 13628 / NBRC 14792 / USDA 110).